We begin with the raw amino-acid sequence, 122 residues long: Large ribosomal subunit protein bL12 (122 aa).

Belongs to the bacterial ribosomal protein bL12 family. As to quaternary structure, homodimer. Part of the ribosomal stalk of the 50S ribosomal subunit. Forms a multimeric L10(L12)X complex, where L10 forms an elongated spine to which 2 to 4 L12 dimers bind in a sequential fashion. Binds GTP-bound translation factors.

Functionally, forms part of the ribosomal stalk which helps the ribosome interact with GTP-bound translation factors. Is thus essential for accurate translation. This chain is Large ribosomal subunit protein bL12, found in Mycoplasma mycoides subsp. mycoides SC (strain CCUG 32753 / NCTC 10114 / PG1).